The sequence spans 443 residues: ATP-dependent protease ATPase subunit HslU (443 aa).

ATP is bound by residues I18, 60–65, D256, E321, and R393; that span reads GVGKTE.

It belongs to the ClpX chaperone family. HslU subfamily. As to quaternary structure, a double ring-shaped homohexamer of HslV is capped on each side by a ring-shaped HslU homohexamer. The assembly of the HslU/HslV complex is dependent on binding of ATP.

It is found in the cytoplasm. In terms of biological role, ATPase subunit of a proteasome-like degradation complex; this subunit has chaperone activity. The binding of ATP and its subsequent hydrolysis by HslU are essential for unfolding of protein substrates subsequently hydrolyzed by HslV. HslU recognizes the N-terminal part of its protein substrates and unfolds these before they are guided to HslV for hydrolysis. The chain is ATP-dependent protease ATPase subunit HslU from Citrobacter koseri (strain ATCC BAA-895 / CDC 4225-83 / SGSC4696).